A 448-amino-acid chain; its full sequence is Signal recognition particle 54 kDa protein (448 aa).

Residues G107 to T114, D189 to R193, and T247 to D250 each bind GTP.

It belongs to the GTP-binding SRP family. SRP54 subfamily. In terms of assembly, part of the signal recognition particle protein translocation system, which is composed of SRP and FtsY. Archaeal SRP consists of a 7S RNA molecule of 300 nucleotides and two protein subunits: SRP54 and SRP19.

It localises to the cytoplasm. The catalysed reaction is GTP + H2O = GDP + phosphate + H(+). Involved in targeting and insertion of nascent membrane proteins into the cytoplasmic membrane. Binds to the hydrophobic signal sequence of the ribosome-nascent chain (RNC) as it emerges from the ribosomes. The SRP-RNC complex is then targeted to the cytoplasmic membrane where it interacts with the SRP receptor FtsY. This chain is Signal recognition particle 54 kDa protein, found in Thermococcus onnurineus (strain NA1).